The sequence spans 121 residues: Large ribosomal subunit protein eL31 (121 aa).

The protein belongs to the eukaryotic ribosomal protein eL31 family.

The protein is Large ribosomal subunit protein eL31 (RPL31) of Perilla frutescens (Beefsteak mint).